The sequence spans 164 residues: Peptidyl-prolyl cis-trans isomerase (164 aa).

The 157-residue stretch at Phe7–Gln163 folds into the PPIase cyclophilin-type domain.

This sequence belongs to the cyclophilin-type PPIase family. PPIase A subfamily.

It is found in the cytoplasm. It carries out the reaction [protein]-peptidylproline (omega=180) = [protein]-peptidylproline (omega=0). Binds cyclosporin A (CsA). CsA mediates some of its effects via an inhibitory action on PPIase. PPIases accelerate the folding of proteins. It catalyzes the cis-trans isomerization of proline imidic peptide bonds in oligopeptides. The polypeptide is Peptidyl-prolyl cis-trans isomerase (Hemicentrotus pulcherrimus (Sea urchin)).